A 297-amino-acid chain; its full sequence is UDP-3-O-acyl-N-acetylglucosamine deacetylase (297 aa).

Zn(2+) contacts are provided by His-77, His-236, and Asp-240. Catalysis depends on His-263, which acts as the Proton donor.

The protein belongs to the LpxC family. Requires Zn(2+) as cofactor.

It catalyses the reaction a UDP-3-O-[(3R)-3-hydroxyacyl]-N-acetyl-alpha-D-glucosamine + H2O = a UDP-3-O-[(3R)-3-hydroxyacyl]-alpha-D-glucosamine + acetate. The protein operates within glycolipid biosynthesis; lipid IV(A) biosynthesis; lipid IV(A) from (3R)-3-hydroxytetradecanoyl-[acyl-carrier-protein] and UDP-N-acetyl-alpha-D-glucosamine: step 2/6. In terms of biological role, catalyzes the hydrolysis of UDP-3-O-myristoyl-N-acetylglucosamine to form UDP-3-O-myristoylglucosamine and acetate, the committed step in lipid A biosynthesis. In Psychrobacter sp. (strain PRwf-1), this protein is UDP-3-O-acyl-N-acetylglucosamine deacetylase.